We begin with the raw amino-acid sequence, 67 residues long: Large ribosomal subunit protein bL32 (67 aa).

Positions 1 to 19 (MAVPKRKMSRANTRARRSQ) are enriched in basic residues. The segment at 1 to 21 (MAVPKRKMSRANTRARRSQWK) is disordered.

Belongs to the bacterial ribosomal protein bL32 family.

In Micrococcus luteus (strain ATCC 4698 / DSM 20030 / JCM 1464 / CCM 169 / CCUG 5858 / IAM 1056 / NBRC 3333 / NCIMB 9278 / NCTC 2665 / VKM Ac-2230) (Micrococcus lysodeikticus), this protein is Large ribosomal subunit protein bL32.